The sequence spans 255 residues: tRNA (guanine-N(1)-)-methyltransferase (255 aa).

Residues Gly113 and 133 to 138 (IGDYVL) each bind S-adenosyl-L-methionine.

It belongs to the RNA methyltransferase TrmD family. Homodimer.

The protein resides in the cytoplasm. The catalysed reaction is guanosine(37) in tRNA + S-adenosyl-L-methionine = N(1)-methylguanosine(37) in tRNA + S-adenosyl-L-homocysteine + H(+). Its function is as follows. Specifically methylates guanosine-37 in various tRNAs. In Escherichia fergusonii (strain ATCC 35469 / DSM 13698 / CCUG 18766 / IAM 14443 / JCM 21226 / LMG 7866 / NBRC 102419 / NCTC 12128 / CDC 0568-73), this protein is tRNA (guanine-N(1)-)-methyltransferase.